A 194-amino-acid chain; its full sequence is Peptidyl-tRNA hydrolase (194 aa).

Tyrosine 17 lines the tRNA pocket. The active-site Proton acceptor is histidine 22. TRNA-binding residues include phenylalanine 68, asparagine 70, and asparagine 116.

Belongs to the PTH family. Monomer.

It is found in the cytoplasm. It carries out the reaction an N-acyl-L-alpha-aminoacyl-tRNA + H2O = an N-acyl-L-amino acid + a tRNA + H(+). Its function is as follows. Hydrolyzes ribosome-free peptidyl-tRNAs (with 1 or more amino acids incorporated), which drop off the ribosome during protein synthesis, or as a result of ribosome stalling. In terms of biological role, catalyzes the release of premature peptidyl moieties from peptidyl-tRNA molecules trapped in stalled 50S ribosomal subunits, and thus maintains levels of free tRNAs and 50S ribosomes. This Shewanella sediminis (strain HAW-EB3) protein is Peptidyl-tRNA hydrolase.